Here is a 209-residue protein sequence, read N- to C-terminus: Small ribosomal subunit protein uS3 (209 aa).

The 70-residue stretch at 38–107 folds into the KH type-2 domain; that stretch reads IRKVIKNKYA…RFIVNVEEIK (70 aa).

Belongs to the universal ribosomal protein uS3 family. In terms of assembly, part of the 30S ribosomal subunit. Forms a tight complex with proteins S10 and S14.

Its function is as follows. Binds the lower part of the 30S subunit head. Binds mRNA in the 70S ribosome, positioning it for translation. This is Small ribosomal subunit protein uS3 from Thermosipho africanus (strain TCF52B).